Here is a 529-residue protein sequence, read N- to C-terminus: Ectonucleoside triphosphate diphosphohydrolase 3 (529 aa).

The Cytoplasmic segment spans residues 1-22 (MFTVMTRQPCEQAGFRALSRTP). Residues 23 to 43 (AIVTLVVLLVSIVVLVTLTLI) form a helical membrane-spanning segment. Over 44-485 (QIRHPQVLPP…PLIHLPIQPP (442 aa)) the chain is Extracellular. Asn81 carries N-linked (GlcNAc...) asparagine glycosylation. An intrachain disulfide couples Cys92 to Cys116. Residue Asn149 is glycosylated (N-linked (GlcNAc...) asparagine). Glu182 (proton acceptor) is an active-site residue. ATP is bound at residue 222–226 (GASTQ). N-linked (GlcNAc...) asparagine glycosylation is found at Asn238, Asn284, and Asn318. 3 disulfides stabilise this stretch: Cys261–Cys308, Cys289–Cys334, and Cys347–Cys353. 2 N-linked (GlcNAc...) asparagine glycosylation sites follow: Asn381 and Asn392. Residues Cys399 and Cys422 are joined by a disulfide bond. Asn454 carries N-linked (GlcNAc...) asparagine glycosylation. Residues 486-506 (VFMGVLAFFTAIALLCLAFLL) traverse the membrane as a helical segment. Residues 507–529 (YLCSSFRTKERSENAFDQAVDSD) lie on the Cytoplasmic side of the membrane.

This sequence belongs to the GDA1/CD39 NTPase family. Ca(2+) is required as a cofactor. Requires Mg(2+) as cofactor.

It localises to the cell membrane. The catalysed reaction is a ribonucleoside 5'-triphosphate + 2 H2O = a ribonucleoside 5'-phosphate + 2 phosphate + 2 H(+). In terms of biological role, catalyzes the hydrolysis of nucleoside triphosphates and diphosphates. Has a threefold preference for the hydrolysis of ATP and UTP over ADP and UDP. The chain is Ectonucleoside triphosphate diphosphohydrolase 3 from Mus musculus (Mouse).